The sequence spans 94 residues: DASH complex subunit DAD5 (94 aa).

Positions 1-20 (MRRSTIVPTSRTSSSSPSPS) are enriched in low complexity. Residues 1–25 (MRRSTIVPTSRTSSSSPSPSQMKSF) are disordered.

It belongs to the DASH complex HSK3 family. In terms of assembly, component of the DASH complex consisting of ask1, dad1, dad2, dad3, dad4, dam1, duo1, dad5, spc19 and spc34, with a stoichiometry of one copy of each subunit per complex. Multiple DASH complexes oligomerize to form a ring that encircles spindle microtubules and organizes the rod-like NDC80 complexes of the outer kinetochore. DASH complex oligomerization strengthens microtubule attachments. On cytoplasmic microtubules, DASH complexes appear to form patches instead of rings.

The protein resides in the nucleus. It is found in the cytoplasm. Its subcellular location is the cytoskeleton. The protein localises to the spindle. It localises to the chromosome. The protein resides in the centromere. It is found in the kinetochore. Its function is as follows. Component of the DASH complex that connects microtubules with kinetochores and couples microtubule depolymerisation to chromosome movement; it is involved in retrieving kinetochores to the spindle poles before their re-orientation on the spindle in early mitosis and allows microtubule depolymerization to pull chromosomes apart and resist detachment during anaphase. Kinetochores, consisting of a centromere-associated inner segment and a microtubule-contacting outer segment, play a crucial role in chromosome segregation by mediating the physical connection between centromeric DNA and microtubules. Kinetochores also serve as an input point for the spindle assembly checkpoint, which delays anaphase until all chromosomes have bioriented on the mitotic spindle. The DASH complex mediates bipolar kinetochore-microtubule attachments and facilitates the formation of additional interactions between outer kinetochore components and spindle microtubules. During chromosome movement along the microtubule, it is required both for the sliding of kinetochores along the lateral side of the microtubule and also for microtubule end-on pulling on the kinetochore. Modulates cytoplasmic microtubule dynamics by tracking the plus-end of shortening microtubules and slowing their depolymerization. This Schizosaccharomyces pombe (strain 972 / ATCC 24843) (Fission yeast) protein is DASH complex subunit DAD5.